A 627-amino-acid polypeptide reads, in one-letter code: Carene synthase, chloroplastic (627 aa).

The N-terminal 36 residues, 1-36 (MSVISILPLASKSCLYKSLMSSTHELKALCRPIATL), are a transit peptide targeting the chloroplast. Mg(2+)-binding residues include aspartate 378, aspartate 382, and aspartate 530. Positions 378 to 382 (DDMYD) match the DDXXD motif motif.

This sequence belongs to the terpene synthase family. Tpsd subfamily. Mg(2+) serves as cofactor. Mn(2+) is required as a cofactor.

It is found in the plastid. The protein resides in the chloroplast. The enzyme catalyses (2E)-geranyl diphosphate = (+)-car-3-ene + diphosphate. It functions in the pathway terpene metabolism; oleoresin biosynthesis. Terpene synthase (TPS) involved in defensive oleoresin formation in conifers in response to insect attack or other injury. This Picea abies (Norway spruce) protein is Carene synthase, chloroplastic (JF67).